The chain runs to 404 residues: NADH-quinone oxidoreductase subunit D (404 aa).

This sequence belongs to the complex I 49 kDa subunit family. NDH-1 is composed of 14 different subunits. Subunits NuoB, C, D, E, F, and G constitute the peripheral sector of the complex.

It is found in the cell inner membrane. The enzyme catalyses a quinone + NADH + 5 H(+)(in) = a quinol + NAD(+) + 4 H(+)(out). Its function is as follows. NDH-1 shuttles electrons from NADH, via FMN and iron-sulfur (Fe-S) centers, to quinones in the respiratory chain. The immediate electron acceptor for the enzyme in this species is believed to be ubiquinone. Couples the redox reaction to proton translocation (for every two electrons transferred, four hydrogen ions are translocated across the cytoplasmic membrane), and thus conserves the redox energy in a proton gradient. The protein is NADH-quinone oxidoreductase subunit D of Dinoroseobacter shibae (strain DSM 16493 / NCIMB 14021 / DFL 12).